Here is a 139-residue protein sequence, read N- to C-terminus: Ribosome maturation factor RimP (139 aa).

The protein belongs to the RimP family.

The protein localises to the cytoplasm. Required for maturation of 30S ribosomal subunits. The protein is Ribosome maturation factor RimP of Syntrophomonas wolfei subsp. wolfei (strain DSM 2245B / Goettingen).